We begin with the raw amino-acid sequence, 337 residues long: UDP-3-O-acylglucosamine N-acyltransferase 1 (337 aa).

Catalysis depends on His238, which acts as the Proton acceptor.

It belongs to the transferase hexapeptide repeat family. LpxD subfamily. Homotrimer.

It catalyses the reaction a UDP-3-O-[(3R)-3-hydroxyacyl]-alpha-D-glucosamine + a (3R)-hydroxyacyl-[ACP] = a UDP-2-N,3-O-bis[(3R)-3-hydroxyacyl]-alpha-D-glucosamine + holo-[ACP] + H(+). Its pathway is bacterial outer membrane biogenesis; LPS lipid A biosynthesis. Its function is as follows. Catalyzes the N-acylation of UDP-3-O-acylglucosamine using 3-hydroxyacyl-ACP as the acyl donor. Is involved in the biosynthesis of lipid A, a phosphorylated glycolipid that anchors the lipopolysaccharide to the outer membrane of the cell. This Koribacter versatilis (strain Ellin345) protein is UDP-3-O-acylglucosamine N-acyltransferase 1.